Here is a 102-residue protein sequence, read N- to C-terminus: Small ribosomal subunit protein uS10 (102 aa).

It belongs to the universal ribosomal protein uS10 family. As to quaternary structure, part of the 30S ribosomal subunit.

Its function is as follows. Involved in the binding of tRNA to the ribosomes. In Roseiflexus sp. (strain RS-1), this protein is Small ribosomal subunit protein uS10.